The chain runs to 252 residues: Secreted LysM effector LysM1 (252 aa).

Residues 20–64 (FAIPGDPGDTCDTLSDRWGITIDIFKSLNPGVNCPNLVANMEYCV) enclose the LysM 1 domain. Residues 71–98 (DTPSTTTTAKPTMTPTSTPTKTTTTSTA) are disordered. Residues 72-98 (TPSTTTTAKPTMTPTSTPTKTTTTSTA) are compositionally biased toward low complexity. LysM domains follow at residues 126 to 172 (KFHL…YVCV) and 204 to 250 (KFHL…YVCI).

This sequence belongs to the secreted LysM effector family.

Its subcellular location is the secreted. The protein resides in the cell wall. Functionally, secreted effector that binds two substrates, chitin and N-linked oligosaccharides associated with human skin glycoproteins. Could provide the pathogen with three important functions including shielding host cell wall chitin from the human immune system, shielding the pathogen's glycoproteins from host degradation and immune surveillance, and helping facilitate pathogen adhesion to human skin. The chain is Secreted LysM effector LysM1 from Trichophyton rubrum (strain ATCC MYA-4607 / CBS 118892) (Athlete's foot fungus).